The following is a 214-amino-acid chain: Dephospho-CoA kinase (214 aa).

The DPCK domain maps to 4-204; the sequence is IVGLTGGIGS…QRYLQLAQQK (201 aa). 12–17 lines the ATP pocket; that stretch reads GSGKST.

The protein belongs to the CoaE family.

The protein resides in the cytoplasm. It catalyses the reaction 3'-dephospho-CoA + ATP = ADP + CoA + H(+). It participates in cofactor biosynthesis; coenzyme A biosynthesis; CoA from (R)-pantothenate: step 5/5. Its function is as follows. Catalyzes the phosphorylation of the 3'-hydroxyl group of dephosphocoenzyme A to form coenzyme A. This Mannheimia succiniciproducens (strain KCTC 0769BP / MBEL55E) protein is Dephospho-CoA kinase.